The chain runs to 268 residues: Putative hydro-lyase ACICU_01268 (268 aa).

Belongs to the D-glutamate cyclase family.

The polypeptide is Putative hydro-lyase ACICU_01268 (Acinetobacter baumannii (strain ACICU)).